A 449-amino-acid chain; its full sequence is Trigger factor (449 aa).

The PPIase FKBP-type domain occupies 173–258 (GDRVTVDFVG…LKKVEWPHLP (86 aa)).

The protein belongs to the FKBP-type PPIase family. Tig subfamily.

Its subcellular location is the cytoplasm. The catalysed reaction is [protein]-peptidylproline (omega=180) = [protein]-peptidylproline (omega=0). Involved in protein export. Acts as a chaperone by maintaining the newly synthesized protein in an open conformation. Functions as a peptidyl-prolyl cis-trans isomerase. The protein is Trigger factor of Burkholderia mallei (strain NCTC 10229).